The chain runs to 277 residues: Indole-3-glycerol phosphate synthase (277 aa).

It belongs to the TrpC family.

The enzyme catalyses 1-(2-carboxyphenylamino)-1-deoxy-D-ribulose 5-phosphate + H(+) = (1S,2R)-1-C-(indol-3-yl)glycerol 3-phosphate + CO2 + H2O. Its pathway is amino-acid biosynthesis; L-tryptophan biosynthesis; L-tryptophan from chorismate: step 4/5. The sequence is that of Indole-3-glycerol phosphate synthase from Pseudomonas putida (strain ATCC 47054 / DSM 6125 / CFBP 8728 / NCIMB 11950 / KT2440).